The sequence spans 860 residues: Probable beta-glucosidase A (860 aa).

The N-terminal stretch at 1-19 (MRFTSIEAVALTAVSLASA) is a signal peptide. Residues Asn61, Asn211, and Asn252 are each glycosylated (N-linked (GlcNAc...) asparagine). Asp280 is a catalytic residue. N-linked (GlcNAc...) asparagine glycosylation is found at Asn315, Asn322, Asn354, Asn387, Asn442, Asn523, Asn542, Asn564, Asn658, Asn690, and Asn712.

It belongs to the glycosyl hydrolase 3 family.

The protein localises to the secreted. The enzyme catalyses Hydrolysis of terminal, non-reducing beta-D-glucosyl residues with release of beta-D-glucose.. It participates in glycan metabolism; cellulose degradation. Its function is as follows. Beta-glucosidases are one of a number of cellulolytic enzymes involved in the degradation of cellulosic biomass. Catalyzes the last step releasing glucose from the inhibitory cellobiose. This Aspergillus niger (strain ATCC MYA-4892 / CBS 513.88 / FGSC A1513) protein is Probable beta-glucosidase A (bglA).